The chain runs to 61 residues: Inner membrane protein p12 (61 aa).

The chain crosses the membrane as a helical span at residues 16–36 (LLIVAIIVVIMAIMLYYFWWM).

This sequence belongs to the asfivirus inner membrane protein p12 family. Homomultimer; disulfide-linked. Post-translationally, not glycosylated.

Its subcellular location is the virion membrane. This Ornithodoros (relapsing fever ticks) protein is Inner membrane protein p12.